A 221-amino-acid polypeptide reads, in one-letter code: 21 kDa seed protein (221 aa).

The first 26 residues, 1–26 (MKTATAVVLLLFAFTSKSYFFGVANA), serve as a signal peptide directing secretion. A disulfide bond links C69 and C116.

The protein belongs to the protease inhibitor I3 (leguminous Kunitz-type inhibitor) family.

The polypeptide is 21 kDa seed protein (ASP) (Theobroma cacao (Cacao)).